A 144-amino-acid polypeptide reads, in one-letter code: Large ribosomal subunit protein uL11 (144 aa).

This sequence belongs to the universal ribosomal protein uL11 family. In terms of assembly, part of the ribosomal stalk of the 50S ribosomal subunit. Interacts with L10 and the large rRNA to form the base of the stalk. L10 forms an elongated spine to which L12 dimers bind in a sequential fashion forming a multimeric L10(L12)X complex. One or more lysine residues are methylated.

Its function is as follows. Forms part of the ribosomal stalk which helps the ribosome interact with GTP-bound translation factors. The chain is Large ribosomal subunit protein uL11 from Neisseria gonorrhoeae (strain ATCC 700825 / FA 1090).